The sequence spans 169 residues: Aspartic protease inhibitor 3 (169 aa).

Asn-1 is a glycosylation site (N-linked (GlcNAc...) asparagine). Disulfide bonds link Cys-30–Cys-75 and Cys-124–Cys-134.

The protein belongs to the protease inhibitor I3 (leguminous Kunitz-type inhibitor) family.

The protein resides in the vacuole. Functionally, inhibitor of cathepsin D (aspartic protease). May also inhibit trypsin and chymotrypsin (serine proteases). Protects the plant by inhibiting proteases of invading organisms. The polypeptide is Aspartic protease inhibitor 3 (Solanum tuberosum (Potato)).